Reading from the N-terminus, the 167-residue chain is CASP-like protein UU1 (167 aa).

The Cytoplasmic portion of the chain corresponds to 1–17; that stretch reads MVELESQEAVTVASTAD. A helical membrane pass occupies residues 18-38; sequence IAVDVSLRLLAAATSLASAVV. At 39–54 the chain is on the extracellular side; that stretch reads VAANHQQRWGVRVDFT. The helical transmembrane segment at 55–75 threads the bilayer; the sequence is LFQVWIGFVAVNLVCTVYAAA. Residues 76-94 lie on the Cytoplasmic side of the membrane; that stretch reads TAAAARKAMGRWWLHHADA. A helical transmembrane segment spans residues 95–115; sequence VVVNLEAAATAGAGAIGSIAM. At 116–135 the chain is on the extracellular side; the sequence is WGNEASGWYAVCRLYRRYCN. The chain crosses the membrane as a helical span at residues 136–156; that stretch reads AGAAALALSLAAVLLLGVACA. Residues 157 to 167 are Cytoplasmic-facing; sequence RSRYPKMPPTT.

It belongs to the Casparian strip membrane proteins (CASP) family. As to quaternary structure, homodimer and heterodimers.

The protein resides in the cell membrane. The chain is CASP-like protein UU1 from Oryza sativa subsp. indica (Rice).